A 1662-amino-acid chain; its full sequence is Cortactin-binding protein 2 (1662 aa).

Disordered regions lie at residues 1-23, 203-222, 361-440, 454-479, and 498-618; these read MATD…AGAA, KKKT…RSTE, SHSD…LHPG, GNAN…PTSR, and RFTS…PSID. Residues 119-276 adopt a coiled-coil conformation; it reads KKMQERMSAQ…EQLKRGSDSK (158 aa). The span at 386–396 shows a compositional bias: low complexity; sequence PSTDSTPDPTS. The segment covering 411–422 has biased composition (polar residues); that stretch reads QTPGIAPQNSQA. Arg-498 carries the asymmetric dimethylarginine modification. The segment covering 583-597 has biased composition (polar residues); the sequence is TVASPPSSLPQGNRV. ANK repeat units follow at residues 709–739, 743–772, 776–805, 809–838, 842–871, and 912–942; these read GRPT…DINY, DGHS…QINA, NGFT…NINH, GGQT…NRSV, DGWT…PACG, and EGWT…EPER. The interval 1450-1474 is disordered; the sequence is GESGAWRKVNTSPRRKSGRFSLPTW. The residue at position 1524 (Ser-1524) is a Phosphoserine. 2 disordered regions span residues 1580–1602 and 1618–1662; these read SQKE…KSKT and SKVT…KPNK. The span at 1582-1599 shows a compositional bias: polar residues; the sequence is KEVSPLSSHQTTECSNSK. A compositionally biased stretch (low complexity) spans 1624–1638; the sequence is SQNTKRSSSSSNTRQ. The span at 1639–1648 shows a compositional bias: polar residues; it reads IEINNNSKEN. The span at 1649–1662 shows a compositional bias: basic and acidic residues; that stretch reads WNLHKNEHLDKPNK.

Interacts with CTTN/cortactin SH3 domain. Interacts with STRN, STRN4/zinedin and MOB4/phocein; this interactions mediate the association with the STRIPAK core complex and may regulate dendritic spine distribution of the STRIPAK complex in hippocampal neurons. Activation of glutamate receptors weakens the interaction with STRN and STRN4.

It is found in the cytoplasm. The protein resides in the cell cortex. Its subcellular location is the cell projection. It localises to the dendritic spine. Functionally, regulates the dendritic spine distribution of CTTN/cortactin in hippocampal neurons, and thus controls dendritic spinogenesis and dendritic spine maintenance. Associates with the striatin-interacting phosphatase and kinase (STRIPAK) core complex to regulate dendritic spine distribution of the STRIPAK complex in hippocampal neurons. The protein is Cortactin-binding protein 2 (CTTNBP2) of Chlorocebus aethiops (Green monkey).